We begin with the raw amino-acid sequence, 161 residues long: Ribosome maturation factor RimP (161 aa).

This sequence belongs to the RimP family.

It is found in the cytoplasm. Required for maturation of 30S ribosomal subunits. This is Ribosome maturation factor RimP from Rickettsia typhi (strain ATCC VR-144 / Wilmington).